The sequence spans 113 residues: Mini zinc finger protein 3 (113 aa).

The ZF-HD dimerization-type; degenerate zinc finger occupies 24–83 (YGECRRNHAASTGGHAVDGCREFIAAEDGGGGNSTGAVGVAAAALKCAACGCHRSFHRRV). Residues 93 to 113 (DCDSGDTSSSSPSSSSSLSSE) are disordered. Over residues 97-113 (GDTSSSSPSSSSSLSSE) the composition is skewed to low complexity.

In terms of assembly, homo- and heterodimers.

The protein resides in the cytoplasm. In terms of biological role, inhibits zinc finger homeodomain (ZHD) transcription factors, by interacting with them to prevent both their nuclear localization and their DNA-binding properties. The sequence is that of Mini zinc finger protein 3 (MIF3) from Oryza sativa subsp. indica (Rice).